A 386-amino-acid chain; its full sequence is D(1)-like dopamine receptor (386 aa).

The span at 1–10 (MEIFTTTRGT) shows a compositional bias: polar residues. Residues 1 to 28 (MEIFTTTRGTSAGPEPAPGGHGGTDSPR) form a disordered region. Topologically, residues 1 to 35 (MEIFTTTRGTSAGPEPAPGGHGGTDSPRTSDLSLR) are extracellular. The chain crosses the membrane as a helical span at residues 36–56 (ALTGCVLCILIVSTLLGNALV). The Cytoplasmic portion of the chain corresponds to 57–72 (CAAVIKFRHLRSKVTN). A helical membrane pass occupies residues 73-92 (AFVISLAVSDLFVAVLVMPW). Topologically, residues 93–109 (RAVSEVAGVWLFGAFCD) are extracellular. Cys108 and Cys188 are oxidised to a cystine. The helical transmembrane segment at 110-131 (TWVAFDIMCSTASILHLCIISM) threads the bilayer. The Cytoplasmic segment spans residues 132–150 (DRYWAISSPFRYERRMTPR). Residues 151-175 (FGCVMIGVAWTLSVLISFIPVQLNW) form a helical membrane-spanning segment. The Extracellular segment spans residues 176–195 (HARGRERTDPGDCNASLNRT). N-linked (GlcNAc...) asparagine glycans are attached at residues Asn189 and Asn193. Residues 196 to 220 (YAISSSLISFYIPVLIMVGTYTRIF) traverse the membrane as a helical segment. Residues 221–266 (RIGRTQIRRISSLERAAPRATRGPALCDEESSLKTSFRRETKVLKT) are Cytoplasmic-facing. Residues 267–292 (LSVIMGVFVFCWLPFFVLNCMVPFCR) form a helical membrane-spanning segment. Topologically, residues 293-305 (LEPAAAPCVSDTT) are extracellular. A helical transmembrane segment spans residues 306–325 (FSVFVWFGWANSSLNPVIYA). The Cytoplasmic segment spans residues 326 to 386 (FNADFRKAFS…SRGGPYQFAL (61 aa)).

Belongs to the G-protein coupled receptor 1 family.

The protein resides in the cell membrane. The protein localises to the cell projection. It is found in the cilium membrane. Functionally, this is one of the five types (D1 to D5) of receptors for dopamine. The activity of this receptor is mediated by G proteins which activate adenylyl cyclase. The polypeptide is D(1)-like dopamine receptor (Oreochromis mossambicus (Mozambique tilapia)).